The chain runs to 503 residues: EZH inhibitory protein (503 aa).

Residues 1-16 show a composition bias toward basic and acidic residues; it reads MATQSDMEKEQKHQQD. 3 disordered regions span residues 1–72, 97–462, and 483–503; these read MATQ…AAAA, HSDR…RSIS, and VPPEEQAEIESTAHPATPPEP. Low complexity predominate over residues 41–72; sequence PAASVTTVSSQASPSGGAALSSSTAGSSAAAA. Basic and acidic residues predominate over residues 97 to 107; sequence HSDRQDCRSPH. Polar residues predominate over residues 184–197; that stretch reads YPCSGASTSSQATQ. At S259 the chain carries Phosphoserine. The segment covering 345-366 has biased composition (low complexity); sequence LRSRSTQQRSALLSRRSLSGSA. The sufficient for interaction with EZH2 stretch occupies residues 401–409; sequence WHAVRMRAS. Residues 403 to 423 are necessary and sufficient for inhibition of PRC2/EED-EZH1 and PRC2/EED-EZH2 complex activity; that stretch reads AVRMRASSPSPPGRFFLPIPQ. The span at 428–453 shows a compositional bias: low complexity; it reads SSSSSYASNSSSPSRSPGLSPSSPSP.

Interacts with PRC2/EED-EZH1 complex member EZH1 and with PRC2/EED-EZH2 complex member EZH2; the interaction blocks EZH1/EZH2 methyltransferase activity. Interacts (via C-terminus) with SUZ12 which is a member of the PRC2/EED-EZH1 and PRC2/EED-EZH2 complexes. As to expression, in testis, detected in male germ cells inside the seminiferous tubules, especially in spermatogonia and round spermatids (at protein level). In the ovary, expressed in primordial follicles and oocytes but not the external follicle cells (at protein level).

The protein resides in the nucleus. The protein localises to the cytoplasm. Functionally, inhibits PRC2/EED-EZH1 and PRC2/EED-EZH2 complex function by inhibiting EZH1/EZH2 methyltransferase activity, thereby causing down-regulation of histone H3 trimethylation on 'Lys-27' (H3K27me3). Probably inhibits methyltransferase activity by limiting the stimulatory effect of cofactors such as AEBP2 and JARID2. Inhibits H3K27me3 deposition during spermatogenesis and oogenesis. The sequence is that of EZH inhibitory protein from Homo sapiens (Human).